The chain runs to 4114 residues: Ferrichrome siderophore peptide synthetase (4114 aa).

Carrier domains follow at residues 797-874, 1947-2021, 3020-3093, and 3574-3650; these read DPAT…QSSG, TDSE…IDKL, TQSE…MQSS, and QALS…SQTN. Residues Ser835, Ser1982, Ser3054, and Ser3611 each carry the O-(pantetheine 4'-phosphoryl)serine modification. A disordered region spans residues 4040–4061; sequence LDYSHHSQHSTHDRTPPSTPHV. A compositionally biased stretch (basic and acidic residues) spans 4041 to 4054; sequence DYSHHSQHSTHDRT.

The protein belongs to the ATP-dependent AMP-binding enzyme family. The cofactor is pantetheine 4'-phosphate.

The protein operates within siderophore biosynthesis; ferrichrome biosynthesis. In terms of biological role, multidomain peptide synthetase involved in ferrichrome biosynthesis. The protein is Ferrichrome siderophore peptide synthetase (SID2) of Mycosarcoma maydis (Corn smut fungus).